A 590-amino-acid chain; its full sequence is Vesicular glutamate transporter 3 (590 aa).

Residues 1–76 (MPLGGFAGLK…CGCFGLPKRY (76 aa)) lie on the Cytoplasmic side of the membrane. The helical transmembrane segment at 77 to 97 (IIAMLSGLGFCISFGIRCNLG) threads the bilayer. Residues 98 to 130 (VAIVEMVNNNTVYINGTAVMQPAQFNWDPETVG) are Vesicular-facing. N-linked (GlcNAc...) asparagine glycosylation is found at Asn106 and Asn112. The helical transmembrane segment at 131-151 (LIHGSFFWGYIVTQIPGGFIS) threads the bilayer. Over 152 to 153 (NK) the chain is Cytoplasmic. The helical transmembrane segment at 154 to 174 (LAANRVFGAAIFLTSVLNMFI) threads the bilayer. Residues 175 to 182 (PSAARVHY) are Vesicular-facing. The chain crosses the membrane as a helical span at residues 183–203 (GCVMFVRILQGLVEGVTYPAC). Residues 204-221 (HGMWSKWAPPLERSRLAT) are Cytoplasmic-facing. Residues 222–242 (TSFCGSYAGAVIAMPLAGILV) form a helical membrane-spanning segment. Over 243 to 249 (QYVGWPS) the chain is Vesicular. A helical transmembrane segment spans residues 250 to 270 (VFYIYGVFGIIWYIFWILLAY). The Cytoplasmic portion of the chain corresponds to 271-315 (NSPAVHPTISEEERNYIETSIGEGANLMSSTEKFKTPWREFFTSM). Residues 316 to 336 (PVYAIIVANFCRSWTFYLLLI) form a helical membrane-spanning segment. Residues 337 to 354 (SQPAYFEEVFGFPISKVG) lie on the Vesicular side of the membrane. The helical transmembrane segment at 355-375 (ILSAVPHMVMTIIVPIGGQLA) threads the bilayer. Residues 376 to 391 (DFLRSRKILSTTTVRK) are Cytoplasmic-facing. Residues 392 to 412 (IMNCGGFGMEATLLLVVGFSH) traverse the membrane as a helical segment. Residues 413 to 414 (TR) are Vesicular-facing. Residues 415 to 435 (AVAISFLILAVGFSGFAISGF) form a helical membrane-spanning segment. At 436-448 (NVNHLDIAPRYAS) the chain is on the cytoplasmic side. The chain crosses the membrane as a helical span at residues 449 to 469 (ILMGISNGVGTLSGMVCPLIV). The Vesicular portion of the chain corresponds to 470–482 (GALTKHKTRLEWQ). The chain crosses the membrane as a helical span at residues 483 to 503 (HVFVIASMVHYTGVIFYAIFA). The Cytoplasmic segment spans residues 504-587 (SGEKQDWADP…NHYENGEYQT (84 aa)). Residues 526–535 (EDELADETEP) are compositionally biased toward acidic residues. Positions 526–590 (EDELADETEP…ENGEYQTQYQ (65 aa)) are disordered. A compositionally biased stretch (polar residues) spans 536 to 557 (SSDSGLATRQKTYGTTDNSSGR).

It belongs to the major facilitator superfamily. Sodium/anion cotransporter family. VGLUT subfamily.

Its subcellular location is the cytoplasmic vesicle. The protein resides in the secretory vesicle. It localises to the synaptic vesicle membrane. The protein localises to the cell membrane. It is found in the synapse. Its subcellular location is the synaptosome. It carries out the reaction L-glutamate(out) = L-glutamate(in). It catalyses the reaction 3 Na(+)(out) + phosphate(out) = 3 Na(+)(in) + phosphate(in). The catalysed reaction is chloride(in) = chloride(out). Its activity is regulated as follows. The L-glutamate uniporter activity exhibits a biphasic dependence on chloride concentration. Chloride channel activity is allosterically activated by lumenal H(+) and Cl(-) leading to synaptic vesicles acidification. The glutamate transport activity is allosterically activated by lumenal H(+) and Cl(-), preventing non-vesicular L-glutamate release. Multifunctional transporter that transports L-glutamate as well as multiple ions such as chloride, sodium and phosphate. At the synaptic vesicle membrane, mainly functions as an uniporter that mediates the uptake of L-glutamate into synaptic vesicles at presynaptic nerve terminals of excitatory neural cells. The L-glutamate uniporter activity is electrogenic and is driven by the proton electrochemical gradient, mainly by the electrical gradient established by the vacuolar H(+)-ATPase across the synaptic vesicle membrane. In addition, functions as a chloride channel that allows a chloride permeation through the synaptic vesicle membrane that affects the proton electrochemical gradient and promotes synaptic vesicles acidification. At the plasma membrane, following exocytosis, functions as a symporter of Na(+) and phosphate from the extracellular space to the cytoplasm allowing synaptic phosphate homeostasis regulation. The symporter activity is electrogenic. Moreover, operates synergistically with SLC18A3/VACHT under a constant H(+) gradient, thereby allowing striatal vesicular acetylcholine uptake. The chain is Vesicular glutamate transporter 3 from Danio rerio (Zebrafish).